Here is a 397-residue protein sequence, read N- to C-terminus: tRNA pseudouridine synthase D (397 aa).

The Nucleophile role is filled by aspartate 76. One can recognise a TRUD domain in the interval 151-361; sequence GVPNFFGEQR…MEGERRPLRV (211 aa).

The protein belongs to the pseudouridine synthase TruD family.

It carries out the reaction uridine(13) in tRNA = pseudouridine(13) in tRNA. Functionally, responsible for synthesis of pseudouridine from uracil-13 in transfer RNAs. The polypeptide is tRNA pseudouridine synthase D (Geotalea daltonii (strain DSM 22248 / JCM 15807 / FRC-32) (Geobacter daltonii)).